A 1028-amino-acid chain; its full sequence is Protein SMAX1-LIKE 5 (1028 aa).

The Clp R domain maps to 8 to 199 (IQQTLTTEAA…CVEDCSVSSV (192 aa)). Repeat stretches follow at residues 12–102 (LTTE…LNRL) and 116–199 (LANA…VSSV). Positions 871 to 875 (LDLNI) match the EAR motif.

Belongs to the ClpA/ClpB family. Interacts probably with TPL/TPR in an EAR-motif dependent manner. In terms of tissue distribution, detected in roots, seedlings and axillary branches.

Its function is as follows. May function in a transcriptional corepressor complex. The chain is Protein SMAX1-LIKE 5 from Arabidopsis thaliana (Mouse-ear cress).